Reading from the N-terminus, the 203-residue chain is MSQQNASSDIELPHLTGLEARIAERIAPTLADLGYELVRLSVLGRDTPTIQIMADRANGSLISVEDCEQISHAAGAILDVDDPIPGAWMLEVSSAGIDRPLTRAKDWERFAGHLAKAELDVPLNGRRRFSGTVMGARDGNAIIRLDDGTEAVLPLVDIRKARLVLTDALIEASAALAGVSSEGEDGGEARQAPKLNPKKPGKK.

The interval 179–203 (VSSEGEDGGEARQAPKLNPKKPGKK) is disordered.

Belongs to the RimP family.

Its subcellular location is the cytoplasm. Its function is as follows. Required for maturation of 30S ribosomal subunits. This Gluconobacter oxydans (strain 621H) (Gluconobacter suboxydans) protein is Ribosome maturation factor RimP.